The primary structure comprises 128 residues: Small ribosomal subunit protein uS9 (128 aa).

In terms of assembly, part of the 30S ribosomal subunit. Contacts proteins S7 and S10.

In terms of biological role, part of the top of the head of the 30S subunit. The C-terminal region penetrates the head emerging in the P-site where it contacts tRNA. This is Small ribosomal subunit protein uS9 (rpsI) from Thermus thermophilus (strain ATCC 27634 / DSM 579 / HB8).